The chain runs to 591 residues: UvrABC system protein C (591 aa).

A GIY-YIG domain is found at 14 to 91 (DQPGCYLMKD…IKKHDPKYNV (78 aa)). The UVR domain maps to 196–231 (KEVKVELEKKMHKAAEELNFERAKELRDTLGYMEAV).

This sequence belongs to the UvrC family. Interacts with UvrB in an incision complex.

The protein localises to the cytoplasm. Its function is as follows. The UvrABC repair system catalyzes the recognition and processing of DNA lesions. UvrC both incises the 5' and 3' sides of the lesion. The N-terminal half is responsible for the 3' incision and the C-terminal half is responsible for the 5' incision. The polypeptide is UvrABC system protein C (Halalkalibacterium halodurans (strain ATCC BAA-125 / DSM 18197 / FERM 7344 / JCM 9153 / C-125) (Bacillus halodurans)).